Reading from the N-terminus, the 237-residue chain is uncharacterized protein (237 aa).

7 helical membrane passes run 19–39 (ILNGIWLITALGLVATAGLAW), 51–71 (YDSPPMYVAIGLLLLCMYGLS), 81–101 (IAGVIYLFLLSLVAIVVASLV), 106–126 (IIIVFSTAGAMFLISMLAGLL), 136–156 (FIIMMTLTGLALVIIVNAALM), 159–179 (RPIWIISCLMIVLWSGIISHG), and 209–229 (LYYYFIGFFGILAAIAITLVW).

The protein resides in the cell membrane. This is an uncharacterized protein from Escherichia coli (strain K12).